Consider the following 143-residue polypeptide: MVKLEELDFKPKPIDEHFLENDKDYPVTGQHNGHDVRAEGMQRLDADGKPYPTKLGIHGTHVAVDWDCCIADGACMDVCPVNLYEWNLNPGKSGTGNDHKIQKGSEEWNKYRTDKCDPVRESDCIFCMACESVCPVRAIKITP.

Residues 13–60 (PIDEHFLENDKDYPVTGQHNGHDVRAEGMQRLDADGKPYPTKLGIHGT) form an N-terminal extension region. Residues H31, H34, and H58 each coordinate Zn(2+). 2 consecutive 4Fe-4S ferredoxin-type domains span residues 60 to 89 (THVAVDWDCCIADGACMDVCPVNLYEWNLN) and 115 to 143 (KCDPVRESDCIFCMACESVCPVRAIKITP). C69 and C75 together coordinate [3Fe-4S] cluster. C79 lines the [4Fe-4S] cluster pocket. D117 contacts Zn(2+). [4Fe-4S] cluster contacts are provided by C124, C127, and C130. C134 contacts [3Fe-4S] cluster.

[3Fe-4S] cluster serves as cofactor. [4Fe-4S] cluster is required as a cofactor. The cofactor is Zn(2+).

Its function is as follows. Ferredoxins are iron-sulfur proteins that transfer electrons in a wide variety of metabolic reactions. This is Zinc-containing ferredoxin (zfx) from Thermoplasma acidophilum (strain ATCC 25905 / DSM 1728 / JCM 9062 / NBRC 15155 / AMRC-C165).